A 298-amino-acid polypeptide reads, in one-letter code: Ribonuclease HII (298 aa).

Positions methionine 1–arginine 57 are disordered. Over residues serine 8–lysine 55 the composition is skewed to low complexity. The 189-residue stretch at tryptophan 85–glycine 273 folds into the RNase H type-2 domain. A divalent metal cation is bound by residues aspartate 91, glutamate 92, and aspartate 182.

It belongs to the RNase HII family. Mn(2+) is required as a cofactor. It depends on Mg(2+) as a cofactor.

It is found in the cytoplasm. It carries out the reaction Endonucleolytic cleavage to 5'-phosphomonoester.. In terms of biological role, endonuclease that specifically degrades the RNA of RNA-DNA hybrids. In Rhodopseudomonas palustris (strain BisB5), this protein is Ribonuclease HII.